We begin with the raw amino-acid sequence, 466 residues long: Ras GTPase-activating protein-binding protein 1 (466 aa).

The region spanning 11-133 (VGREFVRQYY…FYVHNDIFRY (123 aa)) is the NTF2 domain. Residues Lys36, Lys50, Lys59, Lys64, Lys76, and Lys123 each participate in a glycyl lysine isopeptide (Lys-Gly) (interchain with G-Cter in ubiquitin) cross-link. The interval 142-225 (VTEPQEESEE…EPVLEETVPE (84 aa)) is acidic disordered region. Thr143 is modified (phosphothreonine). Disordered stretches follow at residues 144–172 (EPQE…DSGT) and 184–243 (EEHL…QTVQ). Acidic residues-rich tracts occupy residues 145-157 (PQEE…EEPE) and 185-206 (EHLE…EQEP). Position 149 is a phosphoserine (Ser149). A phosphoserine mark is found at Ser231, Ser232, Ser250, and Ser253. The interval 255-329 (TSKNLPPSGA…REAGEQGDIE (75 aa)) is disordered. 2 stretches are compositionally biased toward basic and acidic residues: residues 297 to 307 (PQRDQRVREQR) and 318 to 329 (PIREAGEQGDIE). Residues 340–415 (HQLFIGNLPH…VRLNVEEKKT (76 aa)) enclose the RRM domain. Residues Lys353 and Lys357 each participate in a glycyl lysine isopeptide (Lys-Gly) (interchain with G-Cter in ubiquitin) cross-link. Ser373 carries the phosphoserine modification. Lys376 participates in a covalent cross-link: Glycyl lysine isopeptide (Lys-Gly) (interchain with G-Cter in ubiquitin). The residue at position 376 (Lys376) is an N6-acetyllysine; alternate. Lys376 is covalently cross-linked (Glycyl lysine isopeptide (Lys-Gly) (interchain with G-Cter in SUMO2); alternate). A Glycyl lysine isopeptide (Lys-Gly) (interchain with G-Cter in ubiquitin); alternate cross-link involves residue Lys393. An RG-rich region region spans residues 410 to 466 (VEEKKTRAAREGDRRDNRLRGPGGPRGGLGGGMRGPPRGGMVQKPGFGVGRGLAPRQ). Residues 413–428 (KKTRAAREGDRRDNRL) are compositionally biased toward basic and acidic residues. Residues 413–466 (KKTRAAREGDRRDNRLRGPGGPRGGLGGGMRGPPRGGMVQKPGFGVGRGLAPRQ) are disordered. Arg429 carries the asymmetric dimethylarginine modification. The span at 430–447 (GPGGPRGGLGGGMRGPPR) shows a compositional bias: gly residues. Arg435 is subject to Asymmetric dimethylarginine; alternate. Omega-N-methylarginine; alternate is present on residues Arg435, Arg447, Arg460, and Arg465. Arg460 carries the post-translational modification Dimethylated arginine; alternate.

As to quaternary structure, homodimer and oligomer. Component of a TAU mRNP complex, at least composed of IGF2BP1, ELAVL4 and G3BP1. Binds to the SH3 domain of Ras GTPase-activating protein (RASA1) in proliferating cells. No interaction in quiescent cells. Interacts (via NTF2 domain) with USP10; inhibiting stress granule formation by lowering G3BP1 valence. Interacts (via NTF2 domain) with CAPRIN1; promoting stress granule formation by lowering the saturation-concentration of G3BP1. Interacts (via NTF2 domain) with UBAP2L; promoting stress granule formation. Associates (via RG-rich region) with 40S ribosome subunits. Interacts with RPTOR and SPAG5; this complex is increased by oxidative stress. Interacts with ATXN2L. Interacts with STYXL1. Interacts with CGAS (via N-terminus); this interaction promotes the DNA-binding and activation of CGAS. Interacts (via C-terminus) with RIGI. Interacts with PABPC1. Interacts with QKI (isoforms QKI6 and QKI7); directing N(7)-methylguanine-containing mRNAs to stress granules. The cofactor is Mg(2+). In terms of processing, phosphorylation of the acidic disordered region regulates stress granule assembly. RASA1-dependent phosphorylation of Ser-149 induces a conformational change that prevents self-association. Dephosphorylation after HRAS activation is required for stress granule assembly. Ser-149 phosphorylation induces partial nuclear localization. Post-translationally, arg-435 is dimethylated, probably to asymmetric dimethylarginine. Ubiquitinated by TRIM21 via 'Lys-63'-linked polyubiquitination in the NTF2 domain in response to heat shock, leading to stress granule disassembly: ubiquitination promotes interaction with the FAF2 adapter, followed by interaction with VCP, which extracts G3BP1 from stress granules, leading to stress granule disassembly. In case of prolonged stress, ubiquitination by TRIM21 leads to autophagy-dependent degradation of G3BP1 via recruitment of ubiquitinated G3BP1 by SQSTM1 and/or CALCOCO2 to autophagosomes.

It localises to the cytoplasm. Its subcellular location is the cytosol. It is found in the perikaryon. The protein resides in the stress granule. The protein localises to the nucleus. It carries out the reaction ATP + H2O = ADP + phosphate + H(+). With respect to regulation, under physiological conditions, G3BP1 adopts a compact state that is stabilized by intramolecular interactions between the RG-rich and the acidic regions that inhibit phase separation. Upon stress, polysomes disassemble and mRNAs are released in an unfolded protein-free state. Binding of unfolded mRNA to G3BP1 outcompetes the intramolecular interactions and RNA-bound G3BP1 adopts an expanded conformation in which the RG-rich region becomes exposed to engage in protein-protein and protein-RNA interactions, allowing physical cross-linking of RNA molecules to form protein-RNA condensates, leading to liquid-liquid phase separation (LLPS). Its function is as follows. Protein involved in various processes, such as stress granule formation and innate immunity. Plays an essential role in stress granule formation. Stress granules are membraneless compartments that store mRNAs and proteins, such as stalled translation pre-initiation complexes, in response to stress. Promotes formation of stress granules phase-separated membraneless compartment by undergoing liquid-liquid phase separation (LLPS) upon unfolded RNA-binding: functions as a molecular switch that triggers RNA-dependent LLPS in response to a rise in intracellular free RNA concentrations. Also acts as an ATP- and magnesium-dependent helicase: unwinds DNA/DNA, RNA/DNA, and RNA/RNA substrates with comparable efficiency. Acts unidirectionally by moving in the 5' to 3' direction along the bound single-stranded DNA. Unwinds preferentially partial DNA and RNA duplexes having a 17 bp annealed portion and either a hanging 3' tail or hanging tails at both 5'- and 3'-ends. Plays an essential role in innate immunity by promoting CGAS and RIGI activity. Participates in the DNA-triggered cGAS/STING pathway by promoting the DNA binding and activation of CGAS. Triggers the condensation of cGAS, a process probably linked to the formation of membrane-less organelles. Also enhances RIGI-induced type I interferon production probably by helping RIGI at sensing pathogenic RNA. May also act as a phosphorylation-dependent sequence-specific endoribonuclease in vitro: Cleaves exclusively between cytosine and adenine and cleaves MYC mRNA preferentially at the 3'-UTR. This is Ras GTPase-activating protein-binding protein 1 (G3BP1) from Pongo abelii (Sumatran orangutan).